The following is a 70-amino-acid chain: MLDPSTGWVLMSLSFSSSLHLMSIDTSQSLIIARASSRVIAGESLPCPGDTLDNLAFTVFPSADSEMDLI.

This is an uncharacterized protein from Vaccinia virus (strain Copenhagen) (VACV).